An 889-amino-acid chain; its full sequence is Rho GTPase-activating protein 27 (889 aa).

The region spanning 6–69 (VGDVYVLVEH…PAQYVRELPA (64 aa)) is the SH3 domain. The tract at residues 104 to 132 (AGPDGAPEESGGRASSLCGPAQRGAATQR) is disordered. Residues Ser-156, Ser-216, and Ser-249 each carry the phosphoserine modification. 2 WW domains span residues 246 to 280 (PLPS…SPFE) and 299 to 333 (VSLE…DEAE). The segment covering 329–341 (EDEAENEPEEELE) has biased composition (acidic residues). A disordered region spans residues 329-397 (EDEAENEPEE…SPLTTPPGWS (69 aa)). A Phosphoserine modification is found at Ser-347. Over residues 383–395 (EPGPTSPLTTPPG) the composition is skewed to low complexity. Positions 411–444 (HFTQEQWVRLEDPHGKPYFYNPEDSSVRWELPQV) constitute a WW 3 domain. The tract at residues 447 to 474 (PAPRSIHKSSQDGDTPAQASPPEEKVPA) is disordered. Ser-456 is modified (phosphoserine). Residue Thr-461 is modified to Phosphothreonine. At Ser-466 the chain carries Phosphoserine. The PH domain occupies 496–612 (TLDKAGVLHR…WHKAIAQGIQ (117 aa)). The tract at residues 617–655 (ELPPEESESSRVDFGSSERLGSWQEKEEDARPNAAAPAL) is disordered. The Rho-GAP domain maps to 697-886 (CALAALCERE…LILQQCADIF (190 aa)).

Interacts with SH3KBP1/CIN85. As to expression, expressed in germinal center B-cell, spleen, chronic lymphocytic leukemia, pancreatic cancer and lung cancer.

The protein localises to the cytoplasm. Its subcellular location is the membrane. Rho GTPase-activating protein which may be involved in clathrin-mediated endocytosis. GTPase activators for the Rho-type GTPases act by converting them to an inactive GDP-bound state. Has activity toward CDC42 and RAC1. The chain is Rho GTPase-activating protein 27 from Homo sapiens (Human).